A 795-amino-acid chain; its full sequence is RalBP1-associated Eps domain-containing protein 1 (795 aa).

Positions 10–113 constitute an EH 1 domain; it reads EQKYYSDLFS…SKNEQESRLA (104 aa). A disordered region spans residues 112–238; that stretch reads LAASYSSDSE…NWVSFADTPP (127 aa). The segment covering 115 to 126 has biased composition (polar residues); sequence SYSSDSENQGSY. 4 positions are modified to phosphoserine: Ser-145, Ser-162, Ser-166, and Ser-170. A compositionally biased stretch (low complexity) spans 156-168; it reads EQQEPVSPVVSPQ. Thr-173 is subject to Phosphothreonine. Low complexity predominate over residues 205 to 216; it reads GDAQAGSSAGDA. Phosphoserine occurs at positions 272 and 273. One can recognise an EH 2 domain in the interval 285-374; that stretch reads QRQYYVNQFK…ESLMPKLIDL (90 aa). Residue Tyr-288 is modified to Phosphotyrosine. Ser-307 carries the post-translational modification Phosphoserine. One can recognise an EF-hand domain in the interval 318 to 353; the sequence is LPILELSHIWELSDFDKDGALTLDEFCAAFHLVVAR. Ca(2+) is bound by residues Asp-331, Asp-333, Asp-335, and Glu-342. Disordered regions lie at residues 380–433 and 469–720; these read VGEQ…SSQT and ELKR…DEHT. Polar residues predominate over residues 407–433; sequence LNQTWPELNQSSEQWETFSERSSSSQT. Ser-475, Ser-482, and Ser-489 each carry phosphoserine. Polar residues-rich tracts occupy residues 497–518 and 525–542; these read INSS…SDSF and IGSS…SPDN. Ser-539 is subject to Phosphoserine. Thr-543 is subject to Phosphothreonine. Pro residues predominate over residues 543-553; it reads TAPPPPPPRPQ. Ser-561 carries the phosphoserine modification. Positions 562 to 573 are enriched in polar residues; the sequence is LDMNRTFAVTTG. Residues 574–583 are compositionally biased toward low complexity; that stretch reads QQQAGVVAHP. Over residues 584 to 595 the composition is skewed to pro residues; it reads PAVPPRPQPSQA. 2 stretches are compositionally biased toward polar residues: residues 611–622 and 681–692; these read THTSTSPQQIPE and ATNVPANVSKGT. The interval 651 to 795 is interaction with RALBP1; it reads HPEVLPAEKA…LEQLRPFSHL (145 aa). The span at 707–720 shows a compositional bias: basic and acidic residues; it reads KSEDELRPDVDEHT. Ser-708 and Ser-739 each carry phosphoserine. Positions 750 to 790 form a coiled coil; it reads SIRRNKETNTVLARLNSELQQQLKDVLEERISLEVQLEQLR.

In terms of assembly, homodimer (Potential). Interacts with RALBP1, CRK and GRB2. Binding to RALBP1 does not affect its Ral-binding activity. Forms a complex with the SH3 domains of CRK and GRB2 which may link it to an EGF-responsive tyrosine kinase. Interacts with RAB11FIP2. Interacts with AMPH, ITSN1 (via SH3 domains) and SGIP1; may be involved in clathrin-mediated endocytosis. EGF stimulates phosphorylation on Tyr-residues. In terms of tissue distribution, expressed in all tissues examined. The highest level expression was found in the kidney and testis.

Its subcellular location is the membrane. The protein resides in the clathrin-coated pit. Its function is as follows. May coordinate the cellular actions of activated EGF receptors and Ral-GTPases. This is RalBP1-associated Eps domain-containing protein 1 (Reps1) from Mus musculus (Mouse).